Consider the following 472-residue polypeptide: tRNA-2-methylthio-N(6)-dimethylallyladenosine synthase (472 aa).

Positions 1-24 (MTGTPDVFPPATPGGTPLVALPAG) are disordered. The 118-residue stretch at 33-150 (GKLYIKTHGC…LPELIRARRE (118 aa)) folds into the MTTase N-terminal domain. Positions 42, 79, 113, 187, 191, and 194 each coordinate [4Fe-4S] cluster. In terms of domain architecture, Radical SAM core spans 173 to 407 (RADGASAFVS…RINAHAAGIS (235 aa)). The 64-residue stretch at 408 to 471 (EKMVGTVQTV…TNSLRARVVA (64 aa)) folds into the TRAM domain.

It belongs to the methylthiotransferase family. MiaB subfamily. As to quaternary structure, monomer. [4Fe-4S] cluster serves as cofactor.

The protein resides in the cytoplasm. It carries out the reaction N(6)-dimethylallyladenosine(37) in tRNA + (sulfur carrier)-SH + AH2 + 2 S-adenosyl-L-methionine = 2-methylsulfanyl-N(6)-dimethylallyladenosine(37) in tRNA + (sulfur carrier)-H + 5'-deoxyadenosine + L-methionine + A + S-adenosyl-L-homocysteine + 2 H(+). In terms of biological role, catalyzes the methylthiolation of N6-(dimethylallyl)adenosine (i(6)A), leading to the formation of 2-methylthio-N6-(dimethylallyl)adenosine (ms(2)i(6)A) at position 37 in tRNAs that read codons beginning with uridine. The polypeptide is tRNA-2-methylthio-N(6)-dimethylallyladenosine synthase (Stenotrophomonas maltophilia (strain R551-3)).